The following is a 124-amino-acid chain: Small ribosomal subunit protein uS10z/uS10x (124 aa).

Belongs to the universal ribosomal protein uS10 family.

The chain is Small ribosomal subunit protein uS10z/uS10x (RPS20A) from Arabidopsis thaliana (Mouse-ear cress).